The sequence spans 207 residues: Large ribosomal subunit protein bL25 (207 aa).

The protein belongs to the bacterial ribosomal protein bL25 family. CTC subfamily. In terms of assembly, part of the 50S ribosomal subunit; part of the 5S rRNA/L5/L18/L25 subcomplex. Contacts the 5S rRNA. Binds to the 5S rRNA independently of L5 and L18.

In terms of biological role, this is one of the proteins that binds to the 5S RNA in the ribosome where it forms part of the central protuberance. The protein is Large ribosomal subunit protein bL25 of Orientia tsutsugamushi (strain Ikeda) (Rickettsia tsutsugamushi).